The sequence spans 179 residues: Peptidyl-tRNA hydrolase (179 aa).

Residue tyrosine 14 coordinates tRNA. The active-site Proton acceptor is the histidine 19. TRNA contacts are provided by tyrosine 61, asparagine 63, and asparagine 107.

The protein belongs to the PTH family. As to quaternary structure, monomer.

Its subcellular location is the cytoplasm. It carries out the reaction an N-acyl-L-alpha-aminoacyl-tRNA + H2O = an N-acyl-L-amino acid + a tRNA + H(+). In terms of biological role, hydrolyzes ribosome-free peptidyl-tRNAs (with 1 or more amino acids incorporated), which drop off the ribosome during protein synthesis, or as a result of ribosome stalling. Functionally, catalyzes the release of premature peptidyl moieties from peptidyl-tRNA molecules trapped in stalled 50S ribosomal subunits, and thus maintains levels of free tRNAs and 50S ribosomes. This is Peptidyl-tRNA hydrolase from Campylobacter lari (strain RM2100 / D67 / ATCC BAA-1060).